The primary structure comprises 439 residues: Proline--tRNA ligase (439 aa).

Belongs to the class-II aminoacyl-tRNA synthetase family. ProS type 2 subfamily. Homodimer.

The protein localises to the cytoplasm. The catalysed reaction is tRNA(Pro) + L-proline + ATP = L-prolyl-tRNA(Pro) + AMP + diphosphate. Functionally, catalyzes the attachment of proline to tRNA(Pro) in a two-step reaction: proline is first activated by ATP to form Pro-AMP and then transferred to the acceptor end of tRNA(Pro). The chain is Proline--tRNA ligase from Phenylobacterium zucineum (strain HLK1).